The following is a 245-amino-acid chain: Orotidine 5'-phosphate decarboxylase (245 aa).

Substrate contacts are provided by residues D22, K44, 71–80, T131, R192, Q201, G221, and R222; that span reads DLKFHDIPNT. K73 acts as the Proton donor in catalysis.

The protein belongs to the OMP decarboxylase family. Type 1 subfamily. In terms of assembly, homodimer.

It carries out the reaction orotidine 5'-phosphate + H(+) = UMP + CO2. The protein operates within pyrimidine metabolism; UMP biosynthesis via de novo pathway; UMP from orotate: step 2/2. Its function is as follows. Catalyzes the decarboxylation of orotidine 5'-monophosphate (OMP) to uridine 5'-monophosphate (UMP). The polypeptide is Orotidine 5'-phosphate decarboxylase (Escherichia fergusonii (strain ATCC 35469 / DSM 13698 / CCUG 18766 / IAM 14443 / JCM 21226 / LMG 7866 / NBRC 102419 / NCTC 12128 / CDC 0568-73)).